The primary structure comprises 454 residues: tRNA-2-methylthio-N(6)-dimethylallyladenosine synthase (454 aa).

Residues R6–A122 form the MTTase N-terminal domain. C15, C51, C85, C157, C161, and C164 together coordinate [4Fe-4S] cluster. The Radical SAM core domain occupies R143–E380. One can recognise a TRAM domain in the interval Q383 to K447.

Belongs to the methylthiotransferase family. MiaB subfamily. In terms of assembly, monomer. Requires [4Fe-4S] cluster as cofactor.

It is found in the cytoplasm. The enzyme catalyses N(6)-dimethylallyladenosine(37) in tRNA + (sulfur carrier)-SH + AH2 + 2 S-adenosyl-L-methionine = 2-methylsulfanyl-N(6)-dimethylallyladenosine(37) in tRNA + (sulfur carrier)-H + 5'-deoxyadenosine + L-methionine + A + S-adenosyl-L-homocysteine + 2 H(+). Functionally, catalyzes the methylthiolation of N6-(dimethylallyl)adenosine (i(6)A), leading to the formation of 2-methylthio-N6-(dimethylallyl)adenosine (ms(2)i(6)A) at position 37 in tRNAs that read codons beginning with uridine. The polypeptide is tRNA-2-methylthio-N(6)-dimethylallyladenosine synthase (Gloeothece citriformis (strain PCC 7424) (Cyanothece sp. (strain PCC 7424))).